The primary structure comprises 103 residues: Small ribosomal subunit protein uS10 (103 aa).

It belongs to the universal ribosomal protein uS10 family. In terms of assembly, part of the 30S ribosomal subunit.

In terms of biological role, involved in the binding of tRNA to the ribosomes. The sequence is that of Small ribosomal subunit protein uS10 from Blochmanniella pennsylvanica (strain BPEN).